Reading from the N-terminus, the 148-residue chain is Nucleoside diphosphate kinase (148 aa).

Residues Lys9, Phe57, Arg85, Thr91, Arg102, and Asn112 each coordinate ATP. At Thr91 the chain carries Phosphothreonine. His115 functions as the Pros-phosphohistidine intermediate in the catalytic mechanism. The residue at position 122 (Ser122) is a Phosphoserine.

Belongs to the NDK family. As to quaternary structure, homotetramer. The cofactor is Mg(2+).

It localises to the cytoplasm. The catalysed reaction is a 2'-deoxyribonucleoside 5'-diphosphate + ATP = a 2'-deoxyribonucleoside 5'-triphosphate + ADP. The enzyme catalyses a ribonucleoside 5'-diphosphate + ATP = a ribonucleoside 5'-triphosphate + ADP. In terms of biological role, major role in the synthesis of nucleoside triphosphates other than ATP. The ATP gamma phosphate is transferred to the NDP beta phosphate via a ping-pong mechanism, using a phosphorylated active-site intermediate. The sequence is that of Nucleoside diphosphate kinase from Bacillus licheniformis (strain ATCC 14580 / DSM 13 / JCM 2505 / CCUG 7422 / NBRC 12200 / NCIMB 9375 / NCTC 10341 / NRRL NRS-1264 / Gibson 46).